The sequence spans 132 residues: uncharacterized protein (132 aa).

The interval 1-68 is disordered; it reads MCSAGELLRG…HTGEPVGDDY (68 aa). The chain crosses the membrane as a helical span at residues 100 to 120; that stretch reads VIVIFFWVMLWFLGLQALGLV.

The protein belongs to the FAM241 family.

It is found in the membrane. This is an uncharacterized protein from Homo sapiens (Human).